The sequence spans 152 residues: Protein SprT-like (152 aa).

Residues 7-148 (QRLVEEVSLQ…GKCKGKLNLI (142 aa)) form the SprT-like domain. Residue histidine 67 participates in Zn(2+) binding. Glutamate 68 is a catalytic residue. Histidine 71 contacts Zn(2+).

Belongs to the SprT family. It depends on Zn(2+) as a cofactor.

It localises to the cytoplasm. The chain is Protein SprT-like from Bacillus cereus (strain 03BB102).